Here is a 370-residue protein sequence, read N- to C-terminus: Early nodulin-like protein 1 (370 aa).

Residues 1–27 (MSAIMKSLCFSFLILASFATFFSVADA) form the signal peptide. Positions 28–129 (WRFNVGGNGA…GQKLIVVVLA (102 aa)) constitute a Phytocyanin domain. N58 carries an N-linked (GlcNAc...) asparagine glycan. C83 and C117 are disulfide-bonded. Positions 135-175 (SAPAHSPVPSVSPTQPPKSHSPVSPVAPASAPSKSQPPRSS) are enriched in low complexity. Positions 135 to 347 (SAPAHSPVPS…PAPSPRTNSA (213 aa)) are disordered. Polar residues predominate over residues 176 to 194 (VSPAQPPKSSSPISHTPAL). 2 stretches are compositionally biased toward low complexity: residues 195–205 (SPSHATSHSPA) and 215–290 (SPVS…QSPA). Over residues 291 to 305 (TPSPMTPQSPSPVSS) the composition is skewed to pro residues. The span at 306 to 318 (PSPDQSAAPSDQS) shows a compositional bias: low complexity. The span at 319–334 (TPLAPSPSETTPTADN) shows a compositional bias: polar residues. An N-linked (GlcNAc...) asparagine glycan is attached at N334. N345 is lipidated: GPI-anchor amidated asparagine. A propeptide spans 346-370 (SASGLAVTSVMSTLFSATFTFLMFA) (removed in mature form).

The protein belongs to the early nodulin-like (ENODL) family. In terms of tissue distribution, mostly expressed in stems, leaves and flowers, and, to a lower extent, in seedlings, roots and seeds.

The protein localises to the cell membrane. May act as a carbohydrate transporter. The protein is Early nodulin-like protein 1 of Arabidopsis thaliana (Mouse-ear cress).